Here is a 214-residue protein sequence, read N- to C-terminus: Pyridoxine/pyridoxamine 5'-phosphate oxidase (214 aa).

Substrate contacts are provided by residues 9-12 (RREY) and K67. FMN-binding positions include 62 to 67 (RTVLLK), 77 to 78 (YS), R83, K84, and Q106. Substrate-binding residues include Y124, R128, and S132. FMN contacts are provided by residues 141–142 (QS) and W186. 192–194 (RLH) provides a ligand contact to substrate. R196 is a binding site for FMN.

Belongs to the pyridoxamine 5'-phosphate oxidase family. In terms of assembly, homodimer. It depends on FMN as a cofactor.

It catalyses the reaction pyridoxamine 5'-phosphate + O2 + H2O = pyridoxal 5'-phosphate + H2O2 + NH4(+). The enzyme catalyses pyridoxine 5'-phosphate + O2 = pyridoxal 5'-phosphate + H2O2. It participates in cofactor metabolism; pyridoxal 5'-phosphate salvage; pyridoxal 5'-phosphate from pyridoxamine 5'-phosphate: step 1/1. It functions in the pathway cofactor metabolism; pyridoxal 5'-phosphate salvage; pyridoxal 5'-phosphate from pyridoxine 5'-phosphate: step 1/1. In terms of biological role, catalyzes the oxidation of either pyridoxine 5'-phosphate (PNP) or pyridoxamine 5'-phosphate (PMP) into pyridoxal 5'-phosphate (PLP). The protein is Pyridoxine/pyridoxamine 5'-phosphate oxidase of Porphyromonas gingivalis (strain ATCC BAA-308 / W83).